The following is a 514-amino-acid chain: 2'-5'-oligoadenylate synthase-like protein (514 aa).

Alanine 2 bears the N-acetylalanine mark. Ubiquitin-like domains lie at 354–433 (IHLT…IPSE) and 434–509 (IQVF…KGEA).

The protein belongs to the 2-5A synthase family. Specifically interacts with the ligand binding domain of the thyroid receptor (TR). TRIP14 does not require the presence of thyroid hormone for its interaction. Binds MBD1. Expressed in most tissues, with the highest levels in primary blood Leukocytes and other hematopoietic system tissues, colon, stomach and to some extent in testis.

The protein resides in the nucleus. The protein localises to the nucleolus. Its subcellular location is the cytoplasm. Functionally, does not have 2'-5'-OAS activity, but can bind double-stranded RNA. Displays antiviral activity against encephalomyocarditis virus (EMCV) and hepatitis C virus (HCV) via an alternative antiviral pathway independent of RNase L. In Homo sapiens (Human), this protein is 2'-5'-oligoadenylate synthase-like protein (OASL).